A 266-amino-acid chain; its full sequence is Protein-ADP-ribose hydrolase (266 aa).

Positions 74–265 constitute a Macro domain; that stretch reads TDLKDLKPIK…LYKEALNRDA (192 aa). The ADP-D-ribose site is built by D93, I94, and N107. Positions 113, 118, and 120 each coordinate Zn(2+). ADP-D-ribose contacts are provided by C120, I121, D122, S212, T213, G214, and F216.

The protein belongs to the MacroD-type family. Zn-Macro subfamily. In terms of assembly, monomer. Directly interacts with the lipoylated form of GcvH-L. Requires Zn(2+) as cofactor.

The catalysed reaction is 4-O-(ADP-D-ribosyl)-L-aspartyl-[protein] + H2O = L-aspartyl-[protein] + ADP-D-ribose + H(+). ADP-ribosylhydrolase that specifically reverses the SirTM-mediated mono-ADP-ribosylation at an asparatate residue of GcvH-L (SAV0324), by releasing ADP-ribose from the target protein. May play a role in the regulation of the response to host-induced oxidative stress. In Staphylococcus aureus (strain Mu50 / ATCC 700699), this protein is Protein-ADP-ribose hydrolase.